Here is a 1042-residue protein sequence, read N- to C-terminus: Sarcoplasmic/endoplasmic reticulum calcium ATPase 2 (1042 aa).

Residues 1–48 (MENAHTKTVEEVLGHFGVNESTGLSLEQVKKLKERWGSNELPAEEGKT) are Cytoplasmic-facing. A Phosphoserine modification is found at Ser-38. The chain crosses the membrane as a helical span at residues 49–69 (LLELVIEQFEDLLVRILLLAA). Topologically, residues 70-89 (CISFVLAWFEEGEETITAFV) are lumenal. The chain crosses the membrane as a helical span at residues 90 to 110 (EPFVILLILVANAIVGVWQER). Over 111–253 (NAENAIEALK…QERTPLQQKL (143 aa)) the chain is Cytoplasmic. The chain crosses the membrane as a helical span at residues 254–273 (DEFGEQLSKVISLICIAVWI). Topologically, residues 274–295 (INIGHFNDPVHGGSWIRGAIYY) are lumenal. 3'-nitrotyrosine is present on residues Tyr-294 and Tyr-295. Residues 296–313 (FKIAVALAVAAIPEGLPA) form a helical membrane-spanning segment. Ca(2+) is bound by residues Val-304, Ala-305, Ile-307, and Glu-309. Residues 314–756 (VITTCLALGT…EEGRAIYNNM (443 aa)) are Cytoplasmic-facing. Asp-351 (4-aspartylphosphate intermediate) is an active-site residue. Residues Asp-351 and Thr-353 each contribute to the Mg(2+) site. Thr-353 serves as a coordination point for ATP. Phosphothreonine is present on Thr-441. 3 residues coordinate ATP: Glu-442, Arg-489, and Lys-514. Position 531 is a phosphoserine (Ser-531). ATP is bound at residue Arg-559. The segment at 575-594 (MHLKDSANFIKYETNLTFVG) is interaction with HAX1. Ser-580 is subject to Phosphoserine. ATP-binding residues include Thr-624, Gly-625, and Asp-626. Ser-663 is modified (phosphoserine). Arg-677 and Lys-683 together coordinate ATP. Asp-702 lines the Mg(2+) pocket. Residue Asn-705 participates in ATP binding. A helical membrane pass occupies residues 757–776 (KQFIRYLISSNVGEVVCIFL). The Ca(2+) site is built by Asn-767 and Glu-770. The Lumenal segment spans residues 777-786 (TAALGFPEAL). A helical transmembrane segment spans residues 787–807 (IPVQLLWVNLVTDGLPATALG). Residues 787-807 (IPVQLLWVNLVTDGLPATALG) are interaction with PLN. Residues 788-1042 (PVQLLWVNLV…DTNFSDLLWS (255 aa)) form an interaction with TMEM64 and PDIA3 region. Asn-795, Thr-798, and Asp-799 together coordinate Ca(2+). The Cytoplasmic portion of the chain corresponds to 808 to 827 (FNPPDLDIMNKPPRNPKEPL). Residues 828-850 (ISGWLFFRYLAIGCYVGAATVGA) traverse the membrane as a helical segment. Topologically, residues 851–896 (AAWWFIAADGGPRVSFYQLSHFLQCKEDNPDFEGVDCAIFESPYPM) are lumenal. Cys-875 and Cys-887 are disulfide-bonded. A helical membrane pass occupies residues 897–916 (TMALSVLVTIEMCNALNSLS). Glu-907 provides a ligand contact to Ca(2+). Residues 917 to 929 (ENQSLLRMPPWEN) lie on the Cytoplasmic side of the membrane. The helical transmembrane segment at 930–948 (IWLVGSICLSMSLHFLILY) threads the bilayer. The interaction with PLN stretch occupies residues 931–942 (WLVGSICLSMSL). Over 949-963 (VEPLPLIFQITPLNV) the chain is Lumenal. Residues 964 to 984 (TQWLMVLKISLPVILMDETLK) form a helical membrane-spanning segment. The Cytoplasmic portion of the chain corresponds to 985-1042 (FVARNYLEPGKECVQPAPQSCSLWACTEGVSWPFVLLIVPLVMWVYSTDTNFSDLLWS).

This sequence belongs to the cation transport ATPase (P-type) (TC 3.A.3) family. Type IIA subfamily. Interacts with sarcolipin (SLN); the interaction inhibits ATP2A2 Ca(2+) affinity. Interacts with phospholamban (PLN); the interaction inhibits ATP2A2 Ca(2+) affinity. Interacts with myoregulin (MRLN). Interacts with ARLN and ERLN; the interactions inhibit ATP2A2 Ca(2+) affinity. Interacts with SRTIT1/DWORF; the interaction results in activation of ATP2A2. Interacts with the monomeric forms of SLN, PLN, ARLN, ERLN and STRI1/DWORF. Interacts with HAX1. Interacts with S100A8 and S100A9. Interacts with SLC35G1 and STIM1. Interacts with TMEM203. Interacts with TMEM64 and PDIA3. Interacts with TMX1. Interacts with TMX2. Interacts with VMP1; VMP1 competes with PLN and SLN to prevent them from forming an inhibitory complex with ATP2A2. Interacts with ULK1. Interacts with TUNAR. Interacts with FLVCR2; this interaction occurs in the absence of heme and promotes ATP2A2 proteasomal degradation; this complex is dissociated upon heme binding. Interacts with FNIP1. As to quaternary structure, interacts with TRAM2 (via C-terminus). Mg(2+) serves as cofactor. Post-translationally, nitrated under oxidative stress. Nitration on the two tyrosine residues inhibits catalytic activity. In terms of processing, serotonylated on Gln residues by TGM2 in response to hypoxia, leading to its inactivation. In terms of tissue distribution, isoform 2 is highly expressed in heart and slow twitch skeletal muscle. Isoform 1 is widely expressed.

Its subcellular location is the endoplasmic reticulum membrane. It is found in the sarcoplasmic reticulum membrane. The enzyme catalyses Ca(2+)(in) + ATP + H2O = Ca(2+)(out) + ADP + phosphate + H(+). Has different conformational states with differential Ca2+ affinity. The E1 conformational state (active form) shows high Ca(2+) affinity, while the E2 state exhibits low Ca(2+) affinity. Binding of ATP allosterically increases its affinity for subsequent binding of Ca2+. Reversibly inhibited by phospholamban (PLN) at low calcium concentrations. PLN inhibits ATP2A2 Ca(2+) affinity by disrupting its allosteric activation by ATP. Inhibited by sarcolipin (SLN) and myoregulin (MRLN). The inhibition is blocked by VMP1. Enhanced by STRIT1/DWORF; STRIT1 increases activity by displacing sarcolipin (SLN), phospholamban (PLN) and myoregulin (MRLN). Stabilizes SERCA2 in its E2 state. This magnesium-dependent enzyme catalyzes the hydrolysis of ATP coupled with the translocation of calcium from the cytosol to the sarcoplasmic reticulum lumen. Involved in autophagy in response to starvation. Upon interaction with VMP1 and activation, controls ER-isolation membrane contacts for autophagosome formation. Also modulates ER contacts with lipid droplets, mitochondria and endosomes. In coordination with FLVCR2 mediates heme-stimulated switching from mitochondrial ATP synthesis to thermogenesis. Its function is as follows. Involved in the regulation of the contraction/relaxation cycle. Acts as a regulator of TNFSF11-mediated Ca(2+) signaling pathways via its interaction with TMEM64 which is critical for the TNFSF11-induced CREB1 activation and mitochondrial ROS generation necessary for proper osteoclast generation. Association between TMEM64 and SERCA2 in the ER leads to cytosolic Ca(2+) spiking for activation of NFATC1 and production of mitochondrial ROS, thereby triggering Ca(2+) signaling cascades that promote osteoclast differentiation and activation. The chain is Sarcoplasmic/endoplasmic reticulum calcium ATPase 2 (ATP2A2) from Oryctolagus cuniculus (Rabbit).